Reading from the N-terminus, the 40-residue chain is ATCDLLSGIGVQHSACALHCVFRGNRGGYCTGKGICVCRN.

Cystine bridges form between Cys3–Cys30, Cys16–Cys36, and Cys20–Cys38.

This sequence belongs to the invertebrate defensin family. Type 1 subfamily. In terms of tissue distribution, hemocytes and fat body.

The protein localises to the secreted. In terms of biological role, sapecins, which are potent bactericidal proteins, are produced in response to injury. Sapecin C is cytotoxic to Gram-positive bacteria. This is Sapecin-C from Sarcophaga peregrina (Flesh fly).